Reading from the N-terminus, the 115-residue chain is Transmembrane protein 218 (115 aa).

3 helical membrane passes run 5–25, 38–58, and 81–101; these read VLGVGAGVFLLALIWVLVLLL, FSIVFVFLGALIITTVLLLFP, and YVLLAFLSAVFLGGLFLLLTH.

This sequence belongs to the TMEM218 family. In terms of assembly, interacts with TMEM67.

The protein resides in the membrane. The protein localises to the cell projection. Its subcellular location is the cilium. Its function is as follows. May be involved in ciliary biogenesis or function. The polypeptide is Transmembrane protein 218 (Tmem218) (Mus musculus (Mouse)).